Reading from the N-terminus, the 1012-residue chain is Beta-alanine-activating enzyme (1012 aa).

ATP is bound by residues 177–185 (TTGTTGKPK), Asp-411, Arg-426, and Lys-516.

This sequence belongs to the ATP-dependent AMP-binding enzyme family.

Functionally, covalently binds beta-alanine in an ATP-dependent manner to form a thioester bond with its phosphopantetheine group and transfers it to an, as yet, unknown acceptor. May be required for a post-translational protein modification or for post-transcriptional modification of an RNA. The chain is Beta-alanine-activating enzyme from Drosophila melanogaster (Fruit fly).